The following is a 231-amino-acid chain: NADH-ubiquinone oxidoreductase chain 4 (231 aa).

The next 6 membrane-spanning stretches (helical) occupy residues Pro1–Ile21, Leu34–Leu54, Ile63–Gly85, Ala89–Tyr111, Ile118–Leu138, and Leu156–Ser176.

The protein belongs to the complex I subunit 4 family.

It is found in the mitochondrion membrane. It carries out the reaction a ubiquinone + NADH + 5 H(+)(in) = a ubiquinol + NAD(+) + 4 H(+)(out). Core subunit of the mitochondrial membrane respiratory chain NADH dehydrogenase (Complex I) that is believed to belong to the minimal assembly required for catalysis. Complex I functions in the transfer of electrons from NADH to the respiratory chain. The immediate electron acceptor for the enzyme is believed to be ubiquinone. The protein is NADH-ubiquinone oxidoreductase chain 4 (MT-ND4) of Ovophis okinavensis (Ryukyu Island pit viper).